Reading from the N-terminus, the 143-residue chain is Aspartate 1-decarboxylase (143 aa).

The active-site Schiff-base intermediate with substrate; via pyruvic acid is the serine 25. Position 25 is a pyruvic acid (Ser) (serine 25). Threonine 57 provides a ligand contact to substrate. The active-site Proton donor is the tyrosine 58. Residue 73 to 75 (GAA) coordinates substrate.

Belongs to the PanD family. Heterooctamer of four alpha and four beta subunits. Requires pyruvate as cofactor. Post-translationally, is synthesized initially as an inactive proenzyme, which is activated by self-cleavage at a specific serine bond to produce a beta-subunit with a hydroxyl group at its C-terminus and an alpha-subunit with a pyruvoyl group at its N-terminus.

It localises to the cytoplasm. It carries out the reaction L-aspartate + H(+) = beta-alanine + CO2. Its pathway is cofactor biosynthesis; (R)-pantothenate biosynthesis; beta-alanine from L-aspartate: step 1/1. Its function is as follows. Catalyzes the pyruvoyl-dependent decarboxylation of aspartate to produce beta-alanine. The chain is Aspartate 1-decarboxylase from Mycolicibacterium paratuberculosis (strain ATCC BAA-968 / K-10) (Mycobacterium paratuberculosis).